The following is a 463-amino-acid chain: Type I restriction enzyme StySPI specificity subunit (463 aa).

Belongs to the type-I restriction system S methylase family. In terms of assembly, the type I restriction/modification system is composed of three polypeptides R, M and S; the restriction enzyme has stoichiometry R(2)M(2)S(1) while the methyltransferase is M(2)S(1).

The specificity (S) subunit of a type I restriction enzyme; this subunit dictates DNA sequence specificity. The M and S subunits together form a methyltransferase (MTase) that methylates A-2 on the top strand and A-3 on the bottom strand of the sequence 5'-AACN(6)GTRC-3'. In the presence of the R subunit the complex can also act as an endonuclease, binding to the same target sequence but cutting the DNA some distance from this site. Whether the DNA is cut or modified depends on the methylation state of the target sequence. When the target site is unmodified, the DNA is cut. When the target site is hemimethylated, the complex acts as a maintenance MTase modifying the DNA so that both strands become methylated. After locating a non-methylated recognition site, the enzyme complex serves as a molecular motor that translocates DNA in an ATP-dependent manner until a collision occurs that triggers cleavage. The chain is Type I restriction enzyme StySPI specificity subunit from Salmonella potsdam.